A 404-amino-acid polypeptide reads, in one-letter code: Probable glucan endo-1,6-beta-glucosidase B (404 aa).

The N-terminal stretch at 1 to 20 is a signal peptide; the sequence is MTTYQTLFLIPLAISTLVTA. Asn-33 and Asn-130 each carry an N-linked (GlcNAc...) asparagine glycan. Catalysis depends on Glu-222, which acts as the Proton donor. Asn-253 and Asn-299 each carry an N-linked (GlcNAc...) asparagine glycan. Glu-324 serves as the catalytic Nucleophile.

Belongs to the glycosyl hydrolase 5 (cellulase A) family.

The protein resides in the secreted. The catalysed reaction is Random hydrolysis of (1-&gt;6)-linkages in (1-&gt;6)-beta-D-glucans.. In terms of biological role, beta-glucanases participate in the metabolism of beta-glucan, the main structural component of the cell wall. Acts on lutean, pustulan and 1,6-oligo-beta-D-glucosides. The sequence is that of Probable glucan endo-1,6-beta-glucosidase B (exgB) from Aspergillus terreus (strain NIH 2624 / FGSC A1156).